We begin with the raw amino-acid sequence, 526 residues long: Histone-lysine N-methyltransferase SET5 (526 aa).

The 292-residue stretch at Ala112–Val403 folds into the SET domain. Residues Asn450 to Lys492 form a disordered region. Residues Ser476–Lys492 are compositionally biased toward basic and acidic residues. Position 517 is a phosphoserine (Ser517).

The protein belongs to the class V-like SAM-binding methyltransferase superfamily. Histone-lysine methyltransferase family. SET5 subfamily.

It is found in the nucleus. It localises to the chromosome. The protein localises to the cytoplasm. It carries out the reaction L-lysyl-[histone] + S-adenosyl-L-methionine = N(6)-methyl-L-lysyl-[histone] + S-adenosyl-L-homocysteine + H(+). Functionally, histone methyltransferase that monomethylates 'Lys-5', 'Lys-8' and 'Lys-12' of histone H4 (H4K5me1, H4K8me1 and H4K12me1, respectively), thereby controlling gene expression and remodeling chromatin structures. The sequence is that of Histone-lysine N-methyltransferase SET5 (SET5) from Saccharomyces cerevisiae (strain YJM789) (Baker's yeast).